Consider the following 348-residue polypeptide: Dihydroorotase (348 aa).

Positions 17 and 19 each coordinate Zn(2+). Substrate-binding positions include 19–21 (HLR) and Asn45. Zn(2+) is bound by residues Lys103, His140, and His178. The residue at position 103 (Lys103) is an N6-carboxylysine. His140 provides a ligand contact to substrate. Leu223 lines the substrate pocket. Asp251 serves as a coordination point for Zn(2+). Residue Asp251 is part of the active site. Residues His255 and Ala267 each contribute to the substrate site.

It belongs to the metallo-dependent hydrolases superfamily. DHOase family. Class II DHOase subfamily. In terms of assembly, homodimer. The cofactor is Zn(2+).

The enzyme catalyses (S)-dihydroorotate + H2O = N-carbamoyl-L-aspartate + H(+). It participates in pyrimidine metabolism; UMP biosynthesis via de novo pathway; (S)-dihydroorotate from bicarbonate: step 3/3. Its function is as follows. Catalyzes the reversible cyclization of carbamoyl aspartate to dihydroorotate. This Escherichia coli O17:K52:H18 (strain UMN026 / ExPEC) protein is Dihydroorotase.